A 502-amino-acid chain; its full sequence is Large ribosomal subunit protein uL2m (502 aa).

A disordered region spans residues 458-502; that stretch reads AMNPVDHPHGGGEGRTKGGRPSVSPWGKPTKAGFRAGVGVGKRRI. Positions 463–473 are enriched in basic and acidic residues; sequence DHPHGGGEGRT. A compositionally biased stretch (gly residues) spans 493–502; that stretch reads AGVGVGKRRI.

It belongs to the universal ribosomal protein uL2 family.

It is found in the mitochondrion. The chain is Large ribosomal subunit protein uL2m (RPL2) from Oryza sativa (Rice).